The sequence spans 104 residues: Cytochrome c oxidase assembly factor 6 (104 aa).

Positions 1 to 22 (MGLFSFDGGKKESQPPNTRSQR) are disordered. The CHCH domain maps to 22-76 (RKLCWESRDAFFQCLDKADILDAMDPKNSKSIKSHCKVENEKFEENCAHSWIKYF). The short motif at 25 to 35 (CWESRDAFFQC) is the Cx9C motif element. 2 disulfide bridges follow: Cys-25–Cys-68 and Cys-35–Cys-57. Residues 57 to 68 (CKVENEKFEENC) carry the Cx10C motif motif.

The protein belongs to the cytochrome c oxidase subunit 6B family. Interacts with COX2.

The protein resides in the cytoplasm. It localises to the nucleus. The protein localises to the mitochondrion intermembrane space. Involved in the maturation of the mitochondrial respiratory chain complex IV subunit MT-CO2/COX2. Thereby, may regulate early steps of complex IV assembly. Mitochondrial respiratory chain complex IV or cytochrome c oxidase is the component of the respiratory chain that catalyzes the transfer of electrons from intermembrane space cytochrome c to molecular oxygen in the matrix and as a consequence contributes to the proton gradient involved in mitochondrial ATP synthesis. May also be required for efficient formation of respiratory supercomplexes comprised of complexes III and IV. The sequence is that of Cytochrome c oxidase assembly factor 6 from Saccharomyces cerevisiae (strain ATCC 204508 / S288c) (Baker's yeast).